The primary structure comprises 210 residues: Thymidylate kinase (210 aa).

9 to 16 (GLEGAGKS) lines the ATP pocket.

It belongs to the thymidylate kinase family.

The catalysed reaction is dTMP + ATP = dTDP + ADP. Phosphorylation of dTMP to form dTDP in both de novo and salvage pathways of dTTP synthesis. The chain is Thymidylate kinase from Aliivibrio fischeri (strain ATCC 700601 / ES114) (Vibrio fischeri).